We begin with the raw amino-acid sequence, 427 residues long: Membrane-bound hydrogenase subunit alpha (427 aa).

Ni(2+) contacts are provided by Cys68, Cys71, Cys374, and Cys377.

It belongs to the complex I 49 kDa subunit family. As to quaternary structure, the membrane-bound hydrogenase complex is composed of MbhK and MbhL, and may also contain MbhJ. Ni(2+) serves as cofactor.

It is found in the cell membrane. The enzyme catalyses H2 + 2 oxidized [2Fe-2S]-[ferredoxin] = 2 reduced [2Fe-2S]-[ferredoxin] + 2 H(+). Inhibited by 0.1 mM Cu(2+). Functionally, alpha subunit of a hydrogen-evolving hydrogenase that utilizes protons both as a substrate for hydrogen production and proton translocation. Acts by coupling the redox reaction via ferredoxin and iron-sulfur (Fe-S) clusters to proton translocation across the membrane thereby conserving the redox energy in a proton gradient. This is Membrane-bound hydrogenase subunit alpha from Pyrococcus furiosus (strain ATCC 43587 / DSM 3638 / JCM 8422 / Vc1).